The chain runs to 374 residues: N-acetyldiaminopimelate deacetylase (374 aa).

Residue aspartate 69 is part of the active site. Glutamate 128 acts as the Proton acceptor in catalysis.

This sequence belongs to the peptidase M20A family. N-acetyldiaminopimelate deacetylase subfamily.

It carries out the reaction N-acetyl-(2S,6S)-2,6-diaminopimelate + H2O = (2S,6S)-2,6-diaminopimelate + acetate. Its pathway is amino-acid biosynthesis; L-lysine biosynthesis via DAP pathway; LL-2,6-diaminopimelate from (S)-tetrahydrodipicolinate (acetylase route): step 3/3. Catalyzes the conversion of N-acetyl-diaminopimelate to diaminopimelate and acetate. The protein is N-acetyldiaminopimelate deacetylase of Bacillus licheniformis (strain ATCC 14580 / DSM 13 / JCM 2505 / CCUG 7422 / NBRC 12200 / NCIMB 9375 / NCTC 10341 / NRRL NRS-1264 / Gibson 46).